The chain runs to 242 residues: DNA repair protein RecO (242 aa).

Belongs to the RecO family.

Its function is as follows. Involved in DNA repair and RecF pathway recombination. The chain is DNA repair protein RecO from Bacteroides fragilis (strain ATCC 25285 / DSM 2151 / CCUG 4856 / JCM 11019 / LMG 10263 / NCTC 9343 / Onslow / VPI 2553 / EN-2).